The primary structure comprises 619 residues: Chaperone protein HscA homolog (619 aa).

Belongs to the heat shock protein 70 family.

Its function is as follows. Chaperone involved in the maturation of iron-sulfur cluster-containing proteins. Has a low intrinsic ATPase activity which is markedly stimulated by HscB. The chain is Chaperone protein HscA homolog from Pseudomonas aeruginosa (strain LESB58).